The chain runs to 313 residues: Cobalamin biosynthesis protein CobD (313 aa).

5 helical membrane passes run 52–72 (VAGA…GAAL), 79–99 (CWPV…TSLA), 154–174 (VVPL…YRAI), 204–224 (YVGA…VGGS), and 289–309 (AVVL…MLVY).

This sequence belongs to the CobD/CbiB family.

Its subcellular location is the cell membrane. Its pathway is cofactor biosynthesis; adenosylcobalamin biosynthesis. Functionally, converts cobyric acid to cobinamide by the addition of aminopropanol on the F carboxylic group. The sequence is that of Cobalamin biosynthesis protein CobD from Mycobacterium bovis (strain ATCC BAA-935 / AF2122/97).